Consider the following 228-residue polypeptide: MQFIFFGTLFSGLLLVCAVTNDIEDASGETPGIVSQITEEQPHQRQKLYNWDYKDLGTIAFEDIPFPTLQPSQTIDQSENCPEGWIRYSDSCYWVETELLGFAKAERKCSEKQSTLFVANSIDEWEAIRGHSKDSFSSWIGLVRFSHYERSEQLPRWQTEGAVNPSKINWLIKPYSPLVNGWSQLANCAASYKSPASLETASYTYFYPCTYLFYSICERNSTIANSLH.

A signal peptide spans 1–18 (MQFIFFGTLFSGLLLVCA). Ser-27 carries an O-linked (Xyl...) (chondroitin sulfate) serine glycan. The C-type lectin domain occupies 88 to 218 (YSDSCYWVET…CTYLFYSICE (131 aa)). Disulfide bonds link Cys-109/Cys-217 and Cys-188/Cys-209. N-linked (GlcNAc...) asparagine glycosylation occurs at Asn-220.

In Caenorhabditis elegans, this protein is C-type lectin domain-containing protein 88.